The sequence spans 399 residues: Tryptophan synthase beta chain (399 aa).

Lys92 carries the N6-(pyridoxal phosphate)lysine modification.

The protein belongs to the TrpB family. As to quaternary structure, tetramer of two alpha and two beta chains. Pyridoxal 5'-phosphate serves as cofactor.

It catalyses the reaction (1S,2R)-1-C-(indol-3-yl)glycerol 3-phosphate + L-serine = D-glyceraldehyde 3-phosphate + L-tryptophan + H2O. The protein operates within amino-acid biosynthesis; L-tryptophan biosynthesis; L-tryptophan from chorismate: step 5/5. The beta subunit is responsible for the synthesis of L-tryptophan from indole and L-serine. The sequence is that of Tryptophan synthase beta chain from Legionella pneumophila (strain Corby).